The following is a 95-amino-acid chain: Neutrophil antibiotic peptide NP-5 (95 aa).

The N-terminal stretch at 1-19 (MRTLALLAAILLVTLQAQA) is a signal peptide. Positions 20–62 (ELHSGMADDGVDQQQPRAQDLDVAVYIKQDETSPLEVLGAKAG) are excised as a propeptide. 3 disulfide bridges follow: cysteine 65–cysteine 93, cysteine 67–cysteine 82, and cysteine 72–cysteine 92.

Belongs to the alpha-defensin family.

The protein localises to the secreted. In terms of biological role, microbicidal activity. The protein is Neutrophil antibiotic peptide NP-5 of Oryctolagus cuniculus (Rabbit).